A 245-amino-acid polypeptide reads, in one-letter code: tRNA pseudouridine synthase A (245 aa).

D52 (nucleophile) is an active-site residue. Y111 contacts substrate.

The protein belongs to the tRNA pseudouridine synthase TruA family. In terms of assembly, homodimer.

It catalyses the reaction uridine(38/39/40) in tRNA = pseudouridine(38/39/40) in tRNA. In terms of biological role, formation of pseudouridine at positions 38, 39 and 40 in the anticodon stem and loop of transfer RNAs. This Rickettsia bellii (strain RML369-C) protein is tRNA pseudouridine synthase A.